Consider the following 335-residue polypeptide: GTPase Obg (335 aa).

One can recognise an Obg domain in the interval 1–158 (MFVDQITLEL…RLVELELKLI (158 aa)). Residues 159–334 (ADIGLVGFPN…LHDLFKSKLS (176 aa)) enclose the OBG-type G domain. GTP-binding positions include 165 to 172 (GFPNAGKS), 190 to 194 (FTTLH), 215 to 218 (DIPG), 285 to 288 (NKID), and 315 to 317 (SGL). The Mg(2+) site is built by S172 and T192.

This sequence belongs to the TRAFAC class OBG-HflX-like GTPase superfamily. OBG GTPase family. As to quaternary structure, monomer. Mg(2+) is required as a cofactor.

It localises to the cytoplasm. An essential GTPase which binds GTP, GDP and possibly (p)ppGpp with moderate affinity, with high nucleotide exchange rates and a fairly low GTP hydrolysis rate. Plays a role in control of the cell cycle, stress response, ribosome biogenesis and in those bacteria that undergo differentiation, in morphogenesis control. The protein is GTPase Obg of Chlamydia muridarum (strain MoPn / Nigg).